Here is an 85-residue protein sequence, read N- to C-terminus: Large ribosomal subunit protein bL27 (85 aa).

Over residues 1–11 (MASKASGGSTR) the composition is skewed to polar residues. The interval 1–20 (MASKASGGSTRNGRDSISKR) is disordered.

It belongs to the bacterial ribosomal protein bL27 family.

The sequence is that of Large ribosomal subunit protein bL27 from Sulfurihydrogenibium sp. (strain YO3AOP1).